We begin with the raw amino-acid sequence, 33 residues long: Photosystem II reaction center protein Psb30 (33 aa).

The helical transmembrane segment at 5 to 25 threads the bilayer; it reads VIAQLTVLALIVASGPLVIAL.

This sequence belongs to the Psb30/Ycf12 family. PSII is composed of 1 copy each of membrane proteins PsbA, PsbB, PsbC, PsbD, PsbE, PsbF, PsbH, PsbI, PsbJ, PsbK, PsbL, PsbM, PsbT, PsbX, PsbY, PsbZ, Psb30/Ycf12, peripheral proteins of the oxygen-evolving complex and a large number of cofactors. It forms dimeric complexes.

The protein resides in the plastid. It is found in the chloroplast thylakoid membrane. Its function is as follows. A core subunit of photosystem II (PSII), probably helps stabilize the reaction center. The sequence is that of Photosystem II reaction center protein Psb30 from Marchantia polymorpha (Common liverwort).